The sequence spans 183 residues: TATA-box-binding protein (183 aa).

2 tandem repeats follow at residues 8 to 84 (VENI…VDKI) and 99 to 175 (IQNI…KERL).

This sequence belongs to the TBP family.

Functionally, general factor that plays a role in the activation of archaeal genes transcribed by RNA polymerase. Binds specifically to the TATA box promoter element which lies close to the position of transcription initiation. This is TATA-box-binding protein from Methanosphaera stadtmanae (strain ATCC 43021 / DSM 3091 / JCM 11832 / MCB-3).